The chain runs to 139 residues: uncharacterized protein (139 aa).

The next 2 helical transmembrane spans lie at 71–91 (LFSA…ATLL) and 97–117 (ENEL…FVMV).

The protein belongs to the RseC family.

Its subcellular location is the cell inner membrane. This is an uncharacterized protein from Haemophilus influenzae (strain ATCC 51907 / DSM 11121 / KW20 / Rd).